A 3508-amino-acid chain; its full sequence is WD repeat and FYVE domain-containing protein 3 (3508 aa).

Phosphoserine occurs at positions 1942 and 2277. Disordered stretches follow at residues 2279–2303 and 2441–2504; these read FGLS…SPSP and SSEG…EKTD. Residues 2284 to 2963 form a sufficient for translocalization to p62 bodies/ALIS region; it reads LTGSRRNRKE…PHPPKRVRSR (680 aa). Residues 2450 to 2459 show a composition bias toward basic and acidic residues; that stretch reads EPEHGEDTIA. Phosphoserine is present on Ser2474. Residues 2513–2638 form the BEACH-type PH domain; that stretch reads EEGEKIQHMY…IRNKVYQRFL (126 aa). Residues 2568–3508 form an interaction with SQSTM1 region; that stretch reads MHEPIIPRGA…RGAEDGPRNC (941 aa). The region spanning 2665–2958 is the BEACH domain; sequence GLLSTLVGEK…QLFKKPHPPK (294 aa). An interaction with ATG5 region spans residues 2963 to 3508; the sequence is RLNGDNIGIS…RGAEDGPRNC (546 aa). WD repeat units lie at residues 3059-3097, 3107-3146, 3149-3188, and 3192-3236; these read SEWG…EKAK, GHTD…FLTQ, GHRA…VSVN, and GRSQ…VPET. A disordered region spans residues 3254 to 3317; sequence AQIGQQAQDD…SGSDDSRRWS (64 aa). A compositionally biased stretch (acidic residues) spans 3261 to 3272; the sequence is QDDDSSDSETEE. Residues Ser3317 and Ser3321 each carry the phosphoserine modification. The LIR motif lies at 3326-3331; the sequence is DGFIFV. A WD 5 repeat occupies 3390–3429; it reads THPAEVTALGVSKDHSRILVGDSRGRVFSWSVSDQPGRSA. The FYVE-type zinc finger occupies 3436–3496; the sequence is DEGGDSCSGC…VCQNCYYSLQ (61 aa). Cys3442, Cys3445, Cys3458, Cys3461, Cys3466, Cys3469, Cys3488, and Cys3491 together coordinate Zn(2+).

As to quaternary structure, directly interacts with ATG5 and associates with the ATG12-ATG5-ATG16L complex. Interacts with p62/SQSTM1. Directly interacts with GABARAP, GABARAPL1 and GABARAPL2; the interaction with GABARAP is required for WDFY3 recruitment to MAP1LC3B-positive p62/SQSTM1 bodies. Weakly interacts with MAP1LC3C; this interaction is direct. Does not interact with MAP1LC3A, nor MAP1LC3B. Interacts with TRAF6. Widely expressed, with high levels in the brain (at protein level). In the brain, expressed by both neuronal and non-neuronal cells. Expressed in bones, in the periosteum, cartilage, growth plate, trabeculae of the primary spongiosa, and scattered hematopoietic cells within the medullary cavity. Tends to be expressed at lower levels in the hypertrophic zone compared to trabeculae. Expressed in osteoblasts, osteoclasts and bone-marrow derived macrophages.

The protein resides in the nucleus. The protein localises to the cytoplasm. It localises to the cytosol. Its subcellular location is the PML body. It is found in the membrane. The protein resides in the perikaryon. The protein localises to the cell projection. It localises to the axon. In terms of biological role, required for selective macroautophagy (aggrephagy). Acts as an adapter protein by linking specific proteins destined for degradation to the core autophagic machinery members, such as the ATG5-ATG12-ATG16L E3-like ligase, SQSTM1 and LC3. Involved in the formation and autophagic degradation of cytoplasmic ubiquitin-containing inclusions (p62 bodies, ALIS/aggresome-like induced structures). Important for normal brain development. Essential for the formation of axonal tracts throughout the brain and spinal cord, including the formation of the major forebrain commissures. Involved in the ability of neural cells to respond to guidance cues. Required for cortical neurons to respond to the trophic effects of netrin-1/NTN1. Regulates Wnt signaling through the removal of DVL3 aggregates, likely in an autophagy-dependent manner. This process may be important for the determination of brain size during embryonic development. May regulate osteoclastogenesis by acting on the TNFSF11/RANKL - TRAF6 pathway. After cytokinetic abscission, involved in midbody remnant degradation. In vitro strongly binds to phosphatidylinositol 3-phosphate (PtdIns3P). This chain is WD repeat and FYVE domain-containing protein 3 (Wdfy3), found in Mus musculus (Mouse).